The chain runs to 346 residues: Methylthioribose-1-phosphate isomerase (346 aa).

Substrate is bound by residues 48–50, Arg-91, and Gln-200; that span reads RGA. Residue Asp-241 is the Proton donor of the active site. 251–252 contributes to the substrate binding site; that stretch reads NK.

The protein belongs to the eIF-2B alpha/beta/delta subunits family. MtnA subfamily.

The catalysed reaction is 5-(methylsulfanyl)-alpha-D-ribose 1-phosphate = 5-(methylsulfanyl)-D-ribulose 1-phosphate. It functions in the pathway amino-acid biosynthesis; L-methionine biosynthesis via salvage pathway; L-methionine from S-methyl-5-thio-alpha-D-ribose 1-phosphate: step 1/6. Catalyzes the interconversion of methylthioribose-1-phosphate (MTR-1-P) into methylthioribulose-1-phosphate (MTRu-1-P). The polypeptide is Methylthioribose-1-phosphate isomerase (Picosynechococcus sp. (strain ATCC 27264 / PCC 7002 / PR-6) (Agmenellum quadruplicatum)).